Reading from the N-terminus, the 135-residue chain is Large ribosomal subunit protein uL16c (135 aa).

Over residues 1 to 23 the composition is skewed to basic residues; the sequence is MLSPKKTKFRKEHRGRMKGRSSR. The interval 1 to 24 is disordered; that stretch reads MLSPKKTKFRKEHRGRMKGRSSRG.

This sequence belongs to the universal ribosomal protein uL16 family. Part of the 50S ribosomal subunit.

The protein resides in the plastid. It localises to the chloroplast. The polypeptide is Large ribosomal subunit protein uL16c (Pelargonium hortorum (Common geranium)).